We begin with the raw amino-acid sequence, 187 residues long: Threonylcarbamoyl-AMP synthase (187 aa).

Residues 3-187 form the YrdC-like domain; the sequence is QVTPSQISGI…IQTGHIFRQG (185 aa).

It belongs to the SUA5 family. TsaC subfamily.

Its subcellular location is the cytoplasm. It catalyses the reaction L-threonine + hydrogencarbonate + ATP = L-threonylcarbamoyladenylate + diphosphate + H2O. Required for the formation of a threonylcarbamoyl group on adenosine at position 37 (t(6)A37) in tRNAs that read codons beginning with adenine. Catalyzes the conversion of L-threonine, HCO(3)(-)/CO(2) and ATP to give threonylcarbamoyl-AMP (TC-AMP) as the acyladenylate intermediate, with the release of diphosphate. This chain is Threonylcarbamoyl-AMP synthase, found in Shewanella amazonensis (strain ATCC BAA-1098 / SB2B).